The following is a 117-amino-acid chain: Small ribosomal subunit protein bS6 (117 aa).

Residues 96-117 (KEAAAPAPKAAPVESAPAVEAE) form a disordered region. Residues 99-117 (AAPAPKAAPVESAPAVEAE) are compositionally biased toward low complexity.

It belongs to the bacterial ribosomal protein bS6 family.

Functionally, binds together with bS18 to 16S ribosomal RNA. The polypeptide is Small ribosomal subunit protein bS6 (Geobacter sulfurreducens (strain ATCC 51573 / DSM 12127 / PCA)).